Consider the following 280-residue polypeptide: Diaminopimelate epimerase (280 aa).

Substrate-binding residues include asparagine 13 and asparagine 66. Cysteine 75 acts as the Proton donor in catalysis. Substrate-binding positions include 76–77, asparagine 165, asparagine 198, and 216–217; these read GN and ER. The Proton acceptor role is filled by cysteine 225. Substrate is bound at residue 226–227; that stretch reads GT.

It belongs to the diaminopimelate epimerase family. In terms of assembly, homodimer.

The protein resides in the cytoplasm. The catalysed reaction is (2S,6S)-2,6-diaminopimelate = meso-2,6-diaminopimelate. The protein operates within amino-acid biosynthesis; L-lysine biosynthesis via DAP pathway; DL-2,6-diaminopimelate from LL-2,6-diaminopimelate: step 1/1. Catalyzes the stereoinversion of LL-2,6-diaminopimelate (L,L-DAP) to meso-diaminopimelate (meso-DAP), a precursor of L-lysine and an essential component of the bacterial peptidoglycan. The sequence is that of Diaminopimelate epimerase from Cyanothece sp. (strain PCC 7425 / ATCC 29141).